The following is a 778-amino-acid chain: Hyperosmolality-gated Ca2+ permeable channel 1.4 (778 aa).

10 consecutive transmembrane segments (helical) span residues 7-27, 101-121, 158-178, 375-395, 427-447, 467-487, 512-532, 584-604, 626-646, and 651-671; these read IGLA…LFAI, IYLI…SILV, FWAH…VLMK, FVMH…IAFV, FLPG…LMIM, YYIF…SAFE, ATFF…GEIF, PVTP…YLVF, VHGR…GLMS, and VQST…HRFC. Residues 738–778 form a disordered region; that stretch reads VVQTKRQRSRRTTVASSNASRGSSQSTPFNQLDLGKGKPET. Over residues 753-763 the composition is skewed to low complexity; that stretch reads SSNASRGSSQS.

The protein belongs to the CSC1 (TC 1.A.17) family.

The protein localises to the membrane. Its function is as follows. Acts as an osmosensitive calcium-permeable cation channel. In Arabidopsis thaliana (Mouse-ear cress), this protein is Hyperosmolality-gated Ca2+ permeable channel 1.4.